The chain runs to 103 residues: Small ribosomal subunit protein uS10 (103 aa).

The protein belongs to the universal ribosomal protein uS10 family. Part of the 30S ribosomal subunit.

In terms of biological role, involved in the binding of tRNA to the ribosomes. The protein is Small ribosomal subunit protein uS10 of Campylobacter lari (strain RM2100 / D67 / ATCC BAA-1060).